A 490-amino-acid polypeptide reads, in one-letter code: Protein nucleotidyltransferase YdiU (490 aa).

Residues G89, G91, R92, K112, D124, G125, R175, and R182 each coordinate ATP. The Proton acceptor role is filled by D251. Positions 252 and 261 each coordinate Mg(2+). D261 contributes to the ATP binding site.

Belongs to the SELO family. Mg(2+) serves as cofactor. Mn(2+) is required as a cofactor.

The catalysed reaction is L-seryl-[protein] + ATP = 3-O-(5'-adenylyl)-L-seryl-[protein] + diphosphate. The enzyme catalyses L-threonyl-[protein] + ATP = 3-O-(5'-adenylyl)-L-threonyl-[protein] + diphosphate. It carries out the reaction L-tyrosyl-[protein] + ATP = O-(5'-adenylyl)-L-tyrosyl-[protein] + diphosphate. It catalyses the reaction L-histidyl-[protein] + UTP = N(tele)-(5'-uridylyl)-L-histidyl-[protein] + diphosphate. The catalysed reaction is L-seryl-[protein] + UTP = O-(5'-uridylyl)-L-seryl-[protein] + diphosphate. The enzyme catalyses L-tyrosyl-[protein] + UTP = O-(5'-uridylyl)-L-tyrosyl-[protein] + diphosphate. In terms of biological role, nucleotidyltransferase involved in the post-translational modification of proteins. It can catalyze the addition of adenosine monophosphate (AMP) or uridine monophosphate (UMP) to a protein, resulting in modifications known as AMPylation and UMPylation. The chain is Protein nucleotidyltransferase YdiU from Vibrio vulnificus (strain YJ016).